We begin with the raw amino-acid sequence, 121 residues long: Small ribosomal subunit protein uS13 (121 aa).

Positions 91-121 are disordered; the sequence is HRRGLPVRGQNTKNNARTRKGPSKTVAGKKK. The segment covering 106-121 has biased composition (basic residues); that stretch reads ARTRKGPSKTVAGKKK.

It belongs to the universal ribosomal protein uS13 family. Part of the 30S ribosomal subunit. Forms a loose heterodimer with protein S19. Forms two bridges to the 50S subunit in the 70S ribosome.

Located at the top of the head of the 30S subunit, it contacts several helices of the 16S rRNA. In the 70S ribosome it contacts the 23S rRNA (bridge B1a) and protein L5 of the 50S subunit (bridge B1b), connecting the 2 subunits; these bridges are implicated in subunit movement. Contacts the tRNAs in the A and P-sites. In Listeria monocytogenes serotype 4b (strain CLIP80459), this protein is Small ribosomal subunit protein uS13.